A 456-amino-acid polypeptide reads, in one-letter code: Ribulose bisphosphate carboxylase large chain (456 aa).

Lys7 is subject to N6,N6,N6-trimethyllysine. The substrate site is built by Asn116 and Thr166. Residue Lys168 is the Proton acceptor of the active site. Lys170 provides a ligand contact to substrate. Positions 194, 196, and 197 each coordinate Mg(2+). Residue Lys194 is modified to N6-carboxylysine. His287 functions as the Proton acceptor in the catalytic mechanism. Positions 288, 320, and 372 each coordinate substrate.

Belongs to the RuBisCO large chain family. Type I subfamily. In terms of assembly, heterohexadecamer of 8 large chains and 8 small chains; disulfide-linked. The disulfide link is formed within the large subunit homodimers. Requires Mg(2+) as cofactor. In terms of processing, the disulfide bond which can form in the large chain dimeric partners within the hexadecamer appears to be associated with oxidative stress and protein turnover.

It is found in the plastid. The protein resides in the chloroplast. It catalyses the reaction 2 (2R)-3-phosphoglycerate + 2 H(+) = D-ribulose 1,5-bisphosphate + CO2 + H2O. The enzyme catalyses D-ribulose 1,5-bisphosphate + O2 = 2-phosphoglycolate + (2R)-3-phosphoglycerate + 2 H(+). In terms of biological role, ruBisCO catalyzes two reactions: the carboxylation of D-ribulose 1,5-bisphosphate, the primary event in carbon dioxide fixation, as well as the oxidative fragmentation of the pentose substrate in the photorespiration process. Both reactions occur simultaneously and in competition at the same active site. In Barnardia japonica (Chinese squill), this protein is Ribulose bisphosphate carboxylase large chain.